Consider the following 629-residue polypeptide: MKEDQNYKTAFGSQNSRDTHRHEISFPSQNWSLEMLLRRLKAIDARRDDKFASVMDAIGEFGTFQWRLVVLTFIPSILSTFFIFSHHFLLTAQRPYCNTSWILEVGPNLTEDEQLNLTLPRAPNGSFLTCLMYIPVPWDLDSIIHFGLNYTETCKFGWIYPFAHTRSLINEFDLVCGNEPNKENGLTVFLSGVLTGSLLFGFLSDKLGRYPIILLSLLGFLIFGFGTAFVSSFYQYLFFRFFVAQASVGYAICSVSLVMEWLVGEHRAQAVILQHSFLTIGVILLTGLAYKVVHWRLLCLLGGMPMFPLICNIWVLRESPRWLMVRGKVEEAKKVLCYAAEVNKKTIPLNLLNELQISGKKVAKASILDFCTNQHLFKVVLAIGCVWFTVSYISFTLNLKMNDFGLDVYFVQMVRSIVAVPARLCCIILLEYFGRKWALNLTLFLVTSMCLFLLFLPQEPKSTIILTLMLAEFSMAGTLSIFFIYTAELLPTVLRSTGLGMVSLAWVAGAISSVAIFKQTKTQLPIFFCCLCCVLALCFSSLVPETGSQSLRDSIEYNIRDSIEPKDRNKDVPMVIAEESMSDIVADSEVTNTTLNAVTFKPEENSLLNMTLEVPKMDLPVQSLKAQPP.

Residues 1 to 21 (MKEDQNYKTAFGSQNSRDTHR) are disordered. Residues 1-67 (MKEDQNYKTA…IGEFGTFQWR (67 aa)) lie on the Cytoplasmic side of the membrane. Polar residues predominate over residues 7-16 (YKTAFGSQNS). A helical membrane pass occupies residues 68 to 88 (LVVLTFIPSILSTFFIFSHHF). At 89–183 (LLTAQRPYCN…LVCGNEPNKE (95 aa)) the chain is on the extracellular side. N-linked (GlcNAc...) asparagine glycans are attached at residues asparagine 98, asparagine 116, asparagine 124, and asparagine 149. The chain crosses the membrane as a helical span at residues 184 to 204 (NGLTVFLSGVLTGSLLFGFLS). Topologically, residues 205–209 (DKLGR) are cytoplasmic. Residues 210–230 (YPIILLSLLGFLIFGFGTAFV) traverse the membrane as a helical segment. The Extracellular portion of the chain corresponds to 231-240 (SSFYQYLFFR). Residues 241-261 (FFVAQASVGYAICSVSLVMEW) traverse the membrane as a helical segment. Topologically, residues 262-269 (LVGEHRAQ) are cytoplasmic. Residues 270–290 (AVILQHSFLTIGVILLTGLAY) traverse the membrane as a helical segment. Topologically, residues 291–295 (KVVHW) are extracellular. Residues 296–316 (RLLCLLGGMPMFPLICNIWVL) traverse the membrane as a helical segment. Topologically, residues 317-378 (RESPRWLMVR…DFCTNQHLFK (62 aa)) are cytoplasmic. Residues 379 to 399 (VVLAIGCVWFTVSYISFTLNL) traverse the membrane as a helical segment. At 400–409 (KMNDFGLDVY) the chain is on the extracellular side. The chain crosses the membrane as a helical span at residues 410-430 (FVQMVRSIVAVPARLCCIILL). Over 431 to 436 (EYFGRK) the chain is Cytoplasmic. A helical transmembrane segment spans residues 437-457 (WALNLTLFLVTSMCLFLLFLP). At 458–463 (QEPKST) the chain is on the extracellular side. Residues 464-484 (IILTLMLAEFSMAGTLSIFFI) form a helical membrane-spanning segment. Topologically, residues 485–496 (YTAELLPTVLRS) are cytoplasmic. The chain crosses the membrane as a helical span at residues 497–517 (TGLGMVSLAWVAGAISSVAIF). The Extracellular segment spans residues 518 to 523 (KQTKTQ). A helical membrane pass occupies residues 524-544 (LPIFFCCLCCVLALCFSSLVP). Topologically, residues 545–629 (ETGSQSLRDS…PVQSLKAQPP (85 aa)) are cytoplasmic.

The protein belongs to the major facilitator (TC 2.A.1) superfamily. Organic cation transporter (TC 2.A.1.19) family. Testis-specific (at protein level). Specifically expressed in male germ cells (at protein level).

The protein localises to the mitochondrion inner membrane. Its subcellular location is the cell projection. It is found in the cilium. The protein resides in the flagellum membrane. It catalyses the reaction riboflavin(in) = riboflavin(out). Functionally, riboflavin transporter localized at the inner mitochondrial membrane of the spermatozoa midpiece, which is required for male fertility. SLC22A14-mediated riboflavin transport is essential for spermatozoa energy generation and motility: riboflavin is the precursor of FMN and FAD, which are coenzymes of many enzymes in the TCA cycle (the citric acid cycle) in mitochondria. Required for sperm motility and normal sperm flagellar structure. The protein is Solute carrier family 22 member 14 of Mus musculus (Mouse).